The chain runs to 543 residues: CTP synthase (543 aa).

The interval 1–265 (MARFIFITGG…DSEVLRAFGI (265 aa)) is amidoligase domain. CTP is bound at residue S13. S13 contacts UTP. 14 to 19 (SLGKGL) contacts ATP. Position 54 (Y54) interacts with L-glutamine. An ATP-binding site is contributed by D71. Mg(2+) is bound by residues D71 and E139. CTP-binding positions include 146–148 (DIE), 186–191 (KTKPTQ), and K222. Residues 186–191 (KTKPTQ) and K222 contribute to the UTP site. Positions 291 to 542 (TIGVVGKYVS…IEAAVKQSRL (252 aa)) constitute a Glutamine amidotransferase type-1 domain. G354 contributes to the L-glutamine binding site. Residue C381 is the Nucleophile; for glutamine hydrolysis of the active site. L-glutamine is bound by residues 382 to 385 (LGMQ), E405, and R470. Catalysis depends on residues H515 and E517.

The protein belongs to the CTP synthase family. As to quaternary structure, homotetramer.

It carries out the reaction UTP + L-glutamine + ATP + H2O = CTP + L-glutamate + ADP + phosphate + 2 H(+). The enzyme catalyses L-glutamine + H2O = L-glutamate + NH4(+). It catalyses the reaction UTP + NH4(+) + ATP = CTP + ADP + phosphate + 2 H(+). It functions in the pathway pyrimidine metabolism; CTP biosynthesis via de novo pathway; CTP from UDP: step 2/2. With respect to regulation, allosterically activated by GTP, when glutamine is the substrate; GTP has no effect on the reaction when ammonia is the substrate. The allosteric effector GTP functions by stabilizing the protein conformation that binds the tetrahedral intermediate(s) formed during glutamine hydrolysis. Inhibited by the product CTP, via allosteric rather than competitive inhibition. In terms of biological role, catalyzes the ATP-dependent amination of UTP to CTP with either L-glutamine or ammonia as the source of nitrogen. Regulates intracellular CTP levels through interactions with the four ribonucleotide triphosphates. This Sphingopyxis alaskensis (strain DSM 13593 / LMG 18877 / RB2256) (Sphingomonas alaskensis) protein is CTP synthase.